Here is a 607-residue protein sequence, read N- to C-terminus: Elongation factor 4 (607 aa).

One can recognise a tr-type G domain in the interval 11-193 (KSIRNFSIIA…QIVAKVPAPT (183 aa)). GTP contacts are provided by residues 23-28 (DHGKST) and 140-143 (NKID).

This sequence belongs to the TRAFAC class translation factor GTPase superfamily. Classic translation factor GTPase family. LepA subfamily.

The protein resides in the cell membrane. It carries out the reaction GTP + H2O = GDP + phosphate + H(+). In terms of biological role, required for accurate and efficient protein synthesis under certain stress conditions. May act as a fidelity factor of the translation reaction, by catalyzing a one-codon backward translocation of tRNAs on improperly translocated ribosomes. Back-translocation proceeds from a post-translocation (POST) complex to a pre-translocation (PRE) complex, thus giving elongation factor G a second chance to translocate the tRNAs correctly. Binds to ribosomes in a GTP-dependent manner. In Exiguobacterium sibiricum (strain DSM 17290 / CCUG 55495 / CIP 109462 / JCM 13490 / 255-15), this protein is Elongation factor 4.